Here is a 91-residue protein sequence, read N- to C-terminus: Insertion element IS1 2 protein InsA (91 aa).

It belongs to the IS1 elements InsA family.

Functionally, absolutely required for transposition of IS1. The protein is Insertion element IS1 2 protein InsA (insA2) of Escherichia coli (strain K12).